A 190-amino-acid chain; its full sequence is Heme-binding protein 1 (190 aa).

It belongs to the HEBP family. Monomer.

The protein resides in the cytoplasm. May bind free porphyrinogens that may be present in the cell and thus facilitate removal of these potentially toxic compound. Binds with a high affinity to one molecule of heme or porphyrins. It binds metalloporphyrins, free porphyrins and N-methylprotoporphyrin with similar affinities. This chain is Heme-binding protein 1 (hebp1), found in Xenopus tropicalis (Western clawed frog).